We begin with the raw amino-acid sequence, 77 residues long: MKLIIFTGLVLFAIVSLIEAQAENEKPCLAQYQVCTHAPGNCCSNLVCDCYGRYKSGARIGRNCFCLQKGVIYKRED.

Residues 1–20 form the signal peptide; the sequence is MKLIIFTGLVLFAIVSLIEA. The propeptide occupies 21–26; that stretch reads QAENEK.

It belongs to the neurotoxin 19 (CSTX) family. 08 (U8-Lctx) subfamily. Contains 4 disulfide bonds. In terms of tissue distribution, expressed by the venom gland.

It is found in the secreted. The protein is U8-lycotoxin-Ls1e of Lycosa singoriensis (Wolf spider).